A 1042-amino-acid polypeptide reads, in one-letter code: Carbamoyl phosphate synthase large chain (1042 aa).

Positions 1-417 (MTEDSRTILL…SLLKALRSSE (417 aa)) are carboxyphosphate synthetic domain. ATP-binding residues include Arg127, Arg182, Gly188, Gly189, Glu221, Ile223, Glu228, Gly254, Ile255, His256, Gln297, and Glu314. Residues 131–343 (RQRMADLGQP…IARVTAKVAL (213 aa)) enclose the ATP-grasp 1 domain. Gln297, Glu314, and Asn316 together coordinate Mg(2+). Positions 297, 314, and 316 each coordinate Mn(2+). An oligomerization domain region spans residues 418 to 558 (YDPSVDWATV…SQGSTGSDVR (141 aa)). A carbamoyl phosphate synthetic domain region spans residues 559–947 (ADRDAHSVVI…WKAQVAASNA (389 aa)). One can recognise an ATP-grasp 2 domain in the interval 689–880 (NRLLDERDIS…IAKLAAKVMA (192 aa)). ATP contacts are provided by Arg725, Glu764, Leu766, Glu771, Gly796, Val797, His798, Ser799, Gln839, and Glu851. The Mg(2+) site is built by Gln839, Glu851, and Asn853. Residues Gln839, Glu851, and Asn853 each coordinate Mn(2+). In terms of domain architecture, MGS-like spans 947–1042 (APVPGSTAVV…DRPVNDETWG (96 aa)). Residues 948-1042 (PVPGSTAVVD…DRPVNDETWG (95 aa)) form an allosteric domain region.

It belongs to the CarB family. Composed of two chains; the small (or glutamine) chain promotes the hydrolysis of glutamine to ammonia, which is used by the large (or ammonia) chain to synthesize carbamoyl phosphate. Tetramer of heterodimers (alpha,beta)4. It depends on Mg(2+) as a cofactor. Mn(2+) is required as a cofactor.

The catalysed reaction is hydrogencarbonate + L-glutamine + 2 ATP + H2O = carbamoyl phosphate + L-glutamate + 2 ADP + phosphate + 2 H(+). The enzyme catalyses hydrogencarbonate + NH4(+) + 2 ATP = carbamoyl phosphate + 2 ADP + phosphate + 2 H(+). The protein operates within amino-acid biosynthesis; L-arginine biosynthesis; carbamoyl phosphate from bicarbonate: step 1/1. It participates in pyrimidine metabolism; UMP biosynthesis via de novo pathway; (S)-dihydroorotate from bicarbonate: step 1/3. Large subunit of the glutamine-dependent carbamoyl phosphate synthetase (CPSase). CPSase catalyzes the formation of carbamoyl phosphate from the ammonia moiety of glutamine, carbonate, and phosphate donated by ATP, constituting the first step of 2 biosynthetic pathways, one leading to arginine and/or urea and the other to pyrimidine nucleotides. The large subunit (synthetase) binds the substrates ammonia (free or transferred from glutamine from the small subunit), hydrogencarbonate and ATP and carries out an ATP-coupled ligase reaction, activating hydrogencarbonate by forming carboxy phosphate which reacts with ammonia to form carbamoyl phosphate. The protein is Carbamoyl phosphate synthase large chain of Halobacterium salinarum (strain ATCC 700922 / JCM 11081 / NRC-1) (Halobacterium halobium).